The chain runs to 129 residues: Large ribosomal subunit protein bL19c (129 aa).

It belongs to the bacterial ribosomal protein bL19 family.

Its subcellular location is the plastid. The chain is Large ribosomal subunit protein bL19c from Prototheca wickerhamii.